A 213-amino-acid polypeptide reads, in one-letter code: Superoxide dismutase [Fe] (213 aa).

Histidine 26, histidine 73, aspartate 156, and histidine 160 together coordinate Fe cation.

It belongs to the iron/manganese superoxide dismutase family. In terms of assembly, homodimer. Fe cation is required as a cofactor.

It catalyses the reaction 2 superoxide + 2 H(+) = H2O2 + O2. Destroys superoxide anion radicals which are normally produced within the cells and which are toxic to biological systems. In Helicobacter pylori (strain ATCC 700392 / 26695) (Campylobacter pylori), this protein is Superoxide dismutase [Fe] (sodB).